Here is a 124-residue protein sequence, read N- to C-terminus: Small ribosomal subunit protein uS13 (124 aa).

The disordered stretch occupies residues 89 to 124 (GRRHRQGLPVRGQRTKTNARTRKGPKRTVAGKKKAK). Basic residues predominate over residues 101–124 (QRTKTNARTRKGPKRTVAGKKKAK).

The protein belongs to the universal ribosomal protein uS13 family. In terms of assembly, part of the 30S ribosomal subunit. Forms a loose heterodimer with protein S19. Forms two bridges to the 50S subunit in the 70S ribosome.

Located at the top of the head of the 30S subunit, it contacts several helices of the 16S rRNA. In the 70S ribosome it contacts the 23S rRNA (bridge B1a) and protein L5 of the 50S subunit (bridge B1b), connecting the 2 subunits; these bridges are implicated in subunit movement. Contacts the tRNAs in the A and P-sites. The polypeptide is Small ribosomal subunit protein uS13 (Nocardioides sp. (strain ATCC BAA-499 / JS614)).